A 245-amino-acid polypeptide reads, in one-letter code: Eukaryotic translation initiation factor 6-2 (245 aa).

It belongs to the eIF-6 family. Monomer. Associates with the 60S ribosomal subunit.

The protein localises to the cytoplasm. The protein resides in the nucleus. It localises to the nucleolus. Its function is as follows. Binds to the 60S ribosomal subunit and prevents its association with the 40S ribosomal subunit to form the 80S initiation complex in the cytoplasm. May also be involved in ribosome biogenesis. The polypeptide is Eukaryotic translation initiation factor 6-2 (Arabidopsis thaliana (Mouse-ear cress)).